The chain runs to 263 residues: 4-hydroxy-2-oxo-heptane-1,7-dioate aldolase (263 aa).

H45 serves as the catalytic Proton acceptor. Q147 provides a ligand contact to substrate. E149 lines the a divalent metal cation pocket. A174 and D175 together coordinate substrate. D175 lines the a divalent metal cation pocket.

The protein belongs to the HpcH/HpaI aldolase family. As to quaternary structure, homohexamer; trimer of dimers. It depends on a divalent metal cation as a cofactor.

It catalyses the reaction 4-hydroxy-2-oxoheptanedioate = succinate semialdehyde + pyruvate. Its pathway is aromatic compound metabolism; 4-hydroxyphenylacetate degradation; pyruvate and succinate semialdehyde from 4-hydroxyphenylacetate: step 7/7. Its function is as follows. Catalyzes the reversible retro-aldol cleavage of 4-hydroxy-2-ketoheptane-1,7-dioate (HKHD) to pyruvate and succinic semialdehyde. This chain is 4-hydroxy-2-oxo-heptane-1,7-dioate aldolase, found in Salmonella dublin (strain CT_02021853).